A 329-amino-acid chain; its full sequence is MNLIHKVSTICQCVLVILAKYCMQIIALSLMSGVQWLAWGIYKINKNRVGIIILFLYIMIVTCYVLTNLTPPGSPSETSFDPNSTRQYMTLQNGKSRFCEKCQEYKCDRSHHCSQCNKCILRMDHHCMWFKNCVGFRNHKFFFLECFYLNLYSICVLYSTFVAITKTFTAEGANISAIYLVFWGFLFAFAVGMSIVMTAFTFYHTSLLIHNLSTLESMSSSWSRYTHSTQPFNVGWYENWCQIMGKSPFLWLLPFPNSIGEGVEYPLNANALPYLPQTEEKNDKLYKSSVPASIAGAEGWSSDEEQYAMKNRRWNPHMGQYEWIEDFLV.

The next 5 membrane-spanning stretches (helical) occupy residues 14–34, 49–69, 141–161, 177–197, and 243–263; these read VLVI…MSGV, VGII…LTNL, FFFL…YSTF, AIYL…SIVM, and IMGK…GEGV. Residues 97 to 147 enclose the DHHC domain; the sequence is RFCEKCQEYKCDRSHHCSQCNKCILRMDHHCMWFKNCVGFRNHKFFFLECF.

The protein belongs to the DHHC palmitoyltransferase family. PFA3 subfamily. In terms of processing, autopalmitoylated.

Its subcellular location is the vacuole membrane. The protein resides in the golgi apparatus membrane. It catalyses the reaction L-cysteinyl-[protein] + hexadecanoyl-CoA = S-hexadecanoyl-L-cysteinyl-[protein] + CoA. Palmitoyltransferase specific for VAC8. Palmitoylates VAC8 at one or more of its N-terminal cysteine residues, which is required for its proper membrane localization. This is Palmitoyltransferase pfa3 (pfa3) from Schizosaccharomyces pombe (strain 972 / ATCC 24843) (Fission yeast).